A 453-amino-acid polypeptide reads, in one-letter code: Chromosomal replication initiator protein DnaA (453 aa).

The domain I, interacts with DnaA modulators stretch occupies residues 1–73 (MSKEEIWDKV…ADLIEKAIGT (73 aa)). The interval 73-114 (TKLMPNFVIQEDLTEDKQVKDSAKAKSEAKPDVQAPQNSSED) is domain II. Residues 91–103 (VKDSAKAKSEAKP) are compositionally biased toward basic and acidic residues. A disordered region spans residues 91 to 113 (VKDSAKAKSEAKPDVQAPQNSSE). The segment at 115 to 331 (QFNVHNTFET…GALTRVIAYS (217 aa)) is domain III, AAA+ region. ATP contacts are provided by Gly-159, Gly-161, Lys-162, and Thr-163. The domain IV, binds dsDNA stretch occupies residues 332-453 (RLQNEAITTE…ENLEKEIRNQ (122 aa)).

Belongs to the DnaA family. As to quaternary structure, oligomerizes as a right-handed, spiral filament on DNA at oriC.

The protein localises to the cytoplasm. Functionally, plays an essential role in the initiation and regulation of chromosomal replication. ATP-DnaA binds to the origin of replication (oriC) to initiate formation of the DNA replication initiation complex once per cell cycle. Binds the DnaA box (a 9 base pair repeat at the origin) and separates the double-stranded (ds)DNA. Forms a right-handed helical filament on oriC DNA; dsDNA binds to the exterior of the filament while single-stranded (ss)DNA is stabiized in the filament's interior. The ATP-DnaA-oriC complex binds and stabilizes one strand of the AT-rich DNA unwinding element (DUE), permitting loading of DNA polymerase. After initiation quickly degrades to an ADP-DnaA complex that is not apt for DNA replication. Binds acidic phospholipids. This Staphylococcus carnosus (strain TM300) protein is Chromosomal replication initiator protein DnaA.